Reading from the N-terminus, the 261-residue chain is Probable trans-aconitate 2-methyltransferase (261 aa).

It belongs to the methyltransferase superfamily. Tam family.

It localises to the cytoplasm. It catalyses the reaction trans-aconitate + S-adenosyl-L-methionine = (E)-3-(methoxycarbonyl)pent-2-enedioate + S-adenosyl-L-homocysteine. Functionally, catalyzes the S-adenosylmethionine monomethyl esterification of trans-aconitate. This Mycobacterium bovis (strain ATCC BAA-935 / AF2122/97) protein is Probable trans-aconitate 2-methyltransferase.